A 119-amino-acid chain; its full sequence is Myohemerythrin-1 (119 aa).

8 residues coordinate Fe cation: H25, H55, N58, E59, H74, H78, H107, and D112.

This sequence belongs to the hemerythrin family. Monomer. In terms of tissue distribution, muscle.

Its function is as follows. Myohemerythrin is an oxygen-binding protein found in the retractor muscles of certain worms. The oxygen-binding site contains two iron atoms. In Phascolopsis gouldii (Peanut worm), this protein is Myohemerythrin-1.